The following is a 445-amino-acid chain: ATP-dependent protease ATPase subunit HslU (445 aa).

Residues Ile17, Gly59–Glu64, Asp254, Glu319, and Arg391 contribute to the ATP site.

The protein belongs to the ClpX chaperone family. HslU subfamily. In terms of assembly, a double ring-shaped homohexamer of HslV is capped on each side by a ring-shaped HslU homohexamer. The assembly of the HslU/HslV complex is dependent on binding of ATP.

Its subcellular location is the cytoplasm. Its function is as follows. ATPase subunit of a proteasome-like degradation complex; this subunit has chaperone activity. The binding of ATP and its subsequent hydrolysis by HslU are essential for unfolding of protein substrates subsequently hydrolyzed by HslV. HslU recognizes the N-terminal part of its protein substrates and unfolds these before they are guided to HslV for hydrolysis. The polypeptide is ATP-dependent protease ATPase subunit HslU (Pseudomonas syringae pv. tomato (strain ATCC BAA-871 / DC3000)).